The primary structure comprises 180 residues: uncharacterized protein (180 aa).

It to H.influenzae HI_0656.1.

This is an uncharacterized protein from Escherichia coli (strain K12).